A 270-amino-acid chain; its full sequence is MTDRYAVMGNPIEHSKSPEIHRMFAEQTGQAIAYERMRVPLEGFEPAVRAFFASGGKGLNITVPFKEQAWVLVDRRAPRAERAGAVNTLLAEAGRLVGDNTDGTGLVRDLTVNHGAALQGRRVLVIGAGGAVRGVLPALLPEAPGEVVIANRTVARAEALVELFADQGRLSAVGFDRLQGPFDVVINGTSAGLAGELPPLPDDLLAPGATCYDMVYGDQPTPFVRWARAHGAAMAVDGLGMLVEQAAESFLIWRGVRPESAPVIAALRPE.

Shikimate contacts are provided by residues 15–17 and threonine 62; that span reads SKS. The active-site Proton acceptor is lysine 66. Asparagine 87 and aspartate 102 together coordinate shikimate. NADP(+) contacts are provided by residues 127 to 131, 151 to 156, and methionine 214; these read GAGGA and NRTVAR. Tyrosine 216 is a binding site for shikimate. NADP(+) is bound at residue glycine 238.

The protein belongs to the shikimate dehydrogenase family. Homodimer.

The catalysed reaction is shikimate + NADP(+) = 3-dehydroshikimate + NADPH + H(+). It participates in metabolic intermediate biosynthesis; chorismate biosynthesis; chorismate from D-erythrose 4-phosphate and phosphoenolpyruvate: step 4/7. Functionally, involved in the biosynthesis of the chorismate, which leads to the biosynthesis of aromatic amino acids. Catalyzes the reversible NADPH linked reduction of 3-dehydroshikimate (DHSA) to yield shikimate (SA). The protein is Shikimate dehydrogenase (NADP(+)) of Alkalilimnicola ehrlichii (strain ATCC BAA-1101 / DSM 17681 / MLHE-1).